A 288-amino-acid chain; its full sequence is Bifunctional protein FolD (288 aa).

NADP(+) contacts are provided by residues 168–170 (GRG), threonine 195, and valine 236.

It belongs to the tetrahydrofolate dehydrogenase/cyclohydrolase family. As to quaternary structure, homodimer.

The catalysed reaction is (6R)-5,10-methylene-5,6,7,8-tetrahydrofolate + NADP(+) = (6R)-5,10-methenyltetrahydrofolate + NADPH. It carries out the reaction (6R)-5,10-methenyltetrahydrofolate + H2O = (6R)-10-formyltetrahydrofolate + H(+). Its pathway is one-carbon metabolism; tetrahydrofolate interconversion. Its function is as follows. Catalyzes the oxidation of 5,10-methylenetetrahydrofolate to 5,10-methenyltetrahydrofolate and then the hydrolysis of 5,10-methenyltetrahydrofolate to 10-formyltetrahydrofolate. The sequence is that of Bifunctional protein FolD from Mycobacterium sp. (strain JLS).